A 195-amino-acid polypeptide reads, in one-letter code: 2-amino-4-hydroxy-6-hydroxymethyldihydropteridine pyrophosphokinase (195 aa).

This sequence belongs to the HPPK family.

The catalysed reaction is 6-hydroxymethyl-7,8-dihydropterin + ATP = (7,8-dihydropterin-6-yl)methyl diphosphate + AMP + H(+). It participates in cofactor biosynthesis; tetrahydrofolate biosynthesis; 2-amino-4-hydroxy-6-hydroxymethyl-7,8-dihydropteridine diphosphate from 7,8-dihydroneopterin triphosphate: step 4/4. Its function is as follows. Catalyzes the transfer of pyrophosphate from adenosine triphosphate (ATP) to 6-hydroxymethyl-7,8-dihydropterin, an enzymatic step in folate biosynthesis pathway. The polypeptide is 2-amino-4-hydroxy-6-hydroxymethyldihydropteridine pyrophosphokinase (folK) (Synechocystis sp. (strain ATCC 27184 / PCC 6803 / Kazusa)).